A 1935-amino-acid chain; its full sequence is Myosin-7 (1935 aa).

The 50-residue stretch at 32 to 81 (DLKKDVFVPDDKEEFVKATILSREGGKVTAETEHGKTVTVKEDQVLQQNP) folds into the Myosin N-terminal SH3-like domain. Residues 85-778 (DKIEDMAMLT…LLGLLEEMRD (694 aa)) enclose the Myosin motor domain. Lysine 129 is modified (N6,N6,N6-trimethyllysine). An ATP-binding site is contributed by 178 to 185 (GESGAGKT). Threonine 378 carries the post-translational modification Phosphothreonine. Actin-binding stretches follow at residues 655–677 (LNKLMTNLRSTHPHFVRCIIPNE) and 757–771 (KFGHTKVFFKAGLLG). The region spanning 781-810 (LSRIITRIQAQSRGVLSRMEFKKLLERRDS) is the IQ domain. Residues 839 to 1935 (LLKSAETEKE…DIGTKGLNEE (1097 aa)) are a coiled coil. A phosphoserine mark is found at serine 1137 and serine 1269. Threonine 1282 carries the phosphothreonine modification. Phosphotyrosine is present on tyrosine 1308. Threonine 1309 carries the phosphothreonine modification. Phosphoserine is present on serine 1510. Phosphothreonine is present on threonine 1513. The tract at residues 1907–1935 (EERADIAESQVNKLRAKSRDIGTKGLNEE) is disordered. Residues 1923 to 1935 (KSRDIGTKGLNEE) are compositionally biased toward basic and acidic residues.

It belongs to the TRAFAC class myosin-kinesin ATPase superfamily. Myosin family. As to quaternary structure, muscle myosin is a hexameric protein that consists of 2 heavy chain subunits (MHC), 2 alkali light chain subunits (MLC) and 2 regulatory light chain subunits (MLC-2). Interacts with ECPAS. Interacts (via C-terminus) with LRRC39.

The protein resides in the cytoplasm. It localises to the myofibril. Its subcellular location is the sarcomere. Functionally, myosins are actin-based motor molecules with ATPase activity essential for muscle contraction. Forms regular bipolar thick filaments that, together with actin thin filaments, constitute the fundamental contractile unit of skeletal and cardiac muscle. This Bos taurus (Bovine) protein is Myosin-7 (MYH7).